Here is a 470-residue protein sequence, read N- to C-terminus: MATLNTRGNDIALNILSSTTESSQAVVLSRARGSPNSQRAWLFGLGTLGIILASVLLNPFTSTQESPLNIDPTDYAARTKHILSTTPLIDGHNDLPYLIRTELKHQIYNDRFTFNTGLLSNTDRKKLRDGMVGGQFWSAYIHCPKDSETNKDVPLDEATWTLRDTLEQIDITKRFVDEFPDLFQFCSNSSCAREAFANGKIGSFIGIEGAHQIGNSLASLRQLYDLGARYITTTHNCDNVFGTAASTVSAGGEDKGLTLFGEEYVAEMNRLGMMLDLSHVSHETMRDTLRLSEAPVIFSHTGAYALSKTLRFAPDDVLKATAEKGGIIMITFINRFLRPDDPDAATIHDVVDHIWHVAQVAGWDHVGVGSDFDGTPVTPRGLEDVSKYPRLVELLMERGATDDQIRKFAGDNILRVWSEVEKAAERIQVEGRKPNEAIWEGRTWVRSEMSPPIMFRDSIGRRIPSYLGEP.

A helical transmembrane segment spans residues 40-60; that stretch reads AWLFGLGTLGIILASVLLNPF. Histidine 92 and aspartate 94 together coordinate Zn(2+). A disulfide bond links cysteine 143 and cysteine 237. A glycan (N-linked (GlcNAc...) asparagine) is linked at asparagine 188. Glutamate 208 is a binding site for Zn(2+). Substrate is bound at residue histidine 235. Residues histidine 279 and histidine 300 each contribute to the Zn(2+) site. Substrate-binding residues include arginine 311 and aspartate 371.

The protein belongs to the metallo-dependent hydrolases superfamily. Peptidase M19 family. Requires Zn(2+) as cofactor.

The protein resides in the membrane. The catalysed reaction is an L-aminoacyl-L-amino acid + H2O = 2 an L-alpha-amino acid. Functionally, hydrolyzes a wide range of dipeptides. This Talaromyces stipitatus (strain ATCC 10500 / CBS 375.48 / QM 6759 / NRRL 1006) (Penicillium stipitatum) protein is Putative dipeptidase TSTA_079200.